The following is a 278-amino-acid chain: Release factor glutamine methyltransferase (278 aa).

Residues 117–121, D140, and N184 each bind S-adenosyl-L-methionine; that span reads GTGSG. A substrate-binding site is contributed by 184-187; sequence NPPY.

Belongs to the protein N5-glutamine methyltransferase family. PrmC subfamily.

The enzyme catalyses L-glutaminyl-[peptide chain release factor] + S-adenosyl-L-methionine = N(5)-methyl-L-glutaminyl-[peptide chain release factor] + S-adenosyl-L-homocysteine + H(+). Methylates the class 1 translation termination release factors RF1/PrfA and RF2/PrfB on the glutamine residue of the universally conserved GGQ motif. The polypeptide is Release factor glutamine methyltransferase (Staphylococcus aureus (strain NCTC 8325 / PS 47)).